Reading from the N-terminus, the 104-residue chain is Large ribosomal subunit protein uL24 (104 aa).

This sequence belongs to the universal ribosomal protein uL24 family. Part of the 50S ribosomal subunit.

In terms of biological role, one of two assembly initiator proteins, it binds directly to the 5'-end of the 23S rRNA, where it nucleates assembly of the 50S subunit. Functionally, one of the proteins that surrounds the polypeptide exit tunnel on the outside of the subunit. In Bartonella henselae (strain ATCC 49882 / DSM 28221 / CCUG 30454 / Houston 1) (Rochalimaea henselae), this protein is Large ribosomal subunit protein uL24.